The following is a 682-amino-acid chain: Potassium-transporting ATPase ATP-binding subunit (682 aa).

Helical transmembrane passes span 34-54 (PVMF…LAMV), 58-78 (IAGS…TVLF), 219-239 (IALT…TATL), and 254-274 (VLVA…LSAI). Residue aspartate 307 is the 4-aspartylphosphate intermediate of the active site. ATP is bound by residues aspartate 344, glutamate 348, 377 to 384 (FTAQSRMS), and lysine 395. The Mg(2+) site is built by aspartate 518 and aspartate 522. 3 helical membrane passes run 588-608 (FAII…LNVM), 616-636 (AILS…PLAL), and 662-682 (LVVP…LGLA).

It belongs to the cation transport ATPase (P-type) (TC 3.A.3) family. Type IA subfamily. As to quaternary structure, the system is composed of three essential subunits: KdpA, KdpB and KdpC.

It localises to the cell inner membrane. It catalyses the reaction K(+)(out) + ATP + H2O = K(+)(in) + ADP + phosphate + H(+). Its function is as follows. Part of the high-affinity ATP-driven potassium transport (or Kdp) system, which catalyzes the hydrolysis of ATP coupled with the electrogenic transport of potassium into the cytoplasm. This subunit is responsible for energy coupling to the transport system and for the release of the potassium ions to the cytoplasm. The protein is Potassium-transporting ATPase ATP-binding subunit of Salmonella typhimurium (strain LT2 / SGSC1412 / ATCC 700720).